We begin with the raw amino-acid sequence, 397 residues long: P2X purinoceptor 3 (397 aa).

Residues 1–20 (MNCISDFFTYETTKSVVVKS) lie on the Cytoplasmic side of the membrane. Residues 21–43 (WTIGIINRVVQLLIISYFVGWVF) form a helical membrane-spanning segment. The Extracellular segment spans residues 44–322 (LHEKAYQVRD…AGKFNIIPTI (279 aa)). Residues Lys63 and Lys65 each coordinate ATP. 3 disulfide bridges follow: Cys107-Cys153, Cys116-Cys137, and Cys122-Cys147. Glu111 serves as a coordination point for Mg(2+). Residue Asn139 is glycosylated (N-linked (GlcNAc...) asparagine). Asp158 provides a ligand contact to Mg(2+). Asp158 is a binding site for Ca(2+). Residue Asn170 is glycosylated (N-linked (GlcNAc...) asparagine). Thr172 provides a ligand contact to ATP. An N-linked (GlcNAc...) asparagine glycan is attached at Asn194. Cystine bridges form between Cys203-Cys213 and Cys247-Cys256. Residues Ser275, Asn279, and Arg281 each contribute to the ATP site. Asn290 carries an N-linked (GlcNAc...) asparagine glycan. Lys299 contacts ATP. The chain crosses the membrane as a helical span at residues 323–341 (ISSVAAFTSVGVGTVLCDI). At 342–397 (ILLNFLKGADQYKAKKFEEVNETTLKIAALTNPVYPSDQTTAEKQSTDSGAFSIGH) the chain is on the cytoplasmic side. Over residues 378–391 (SDQTTAEKQSTDSG) the composition is skewed to polar residues. Residues 378–397 (SDQTTAEKQSTDSGAFSIGH) are disordered.

The protein belongs to the P2X receptor family. Homotrimer. Forms heterotrimer with P2RX2. Heterotrimeric P2RX2/3 has a ligand dose-response profile that is distinct from either homotrimeric P2RX2 or P2RX3.

Its subcellular location is the cell membrane. The catalysed reaction is Ca(2+)(in) = Ca(2+)(out). It carries out the reaction Na(+)(in) = Na(+)(out). With respect to regulation, has high sensitivity to ATP. Fast activation by external ATP. Exhibits rapid desensitization. Sensitives to the ATP agonist:alpha/beta-methylene-ATP. Subject to allosteric inhibition by AF-219. Mg(2+) and Ca(2+) slow deactivation of P2RX3. Extracellular ATP-activated non-selective cation channel. Plays particularly important role in sensory neurons where its activation is critical for gustatory, nociceptive responses, visceral reflexes and sensory hypersensitization. The polypeptide is P2X purinoceptor 3 (P2RX3) (Homo sapiens (Human)).